The chain runs to 24 residues: Humanin-like 3 (24 aa).

The protein belongs to the humanin family. As to expression, highly expressed in testis. Also expressed in kidney, heart, skeletal muscles and brain.

The protein localises to the secreted. The protein resides in the cytoplasm. Its function is as follows. Plays a role as a neuroprotective and antiapoptotic factor. In Homo sapiens (Human), this protein is Humanin-like 3.